The primary structure comprises 156 residues: Small ribosomal subunit protein uS7 (156 aa).

The protein belongs to the universal ribosomal protein uS7 family. As to quaternary structure, part of the 30S ribosomal subunit. Contacts proteins S9 and S11.

Its function is as follows. One of the primary rRNA binding proteins, it binds directly to 16S rRNA where it nucleates assembly of the head domain of the 30S subunit. Is located at the subunit interface close to the decoding center, probably blocks exit of the E-site tRNA. The chain is Small ribosomal subunit protein uS7 from Acholeplasma laidlawii (strain PG-8A).